Here is a 367-residue protein sequence, read N- to C-terminus: Probable butyrate kinase (367 aa).

The protein belongs to the acetokinase family.

It is found in the cytoplasm. The enzyme catalyses butanoate + ATP = butanoyl phosphate + ADP. In Bacillus cereus (strain Q1), this protein is Probable butyrate kinase.